Reading from the N-terminus, the 564-residue chain is Phenylalanine--tRNA ligase beta subunit (564 aa).

A B5 domain is found at 286-362 (YFQNSLKINV…IGKGLDNFKS (77 aa)). The Mg(2+) site is built by D340, D346, E349, and E350.

Belongs to the phenylalanyl-tRNA synthetase beta subunit family. Type 2 subfamily. In terms of assembly, tetramer of two alpha and two beta subunits. Mg(2+) serves as cofactor.

It localises to the cytoplasm. It carries out the reaction tRNA(Phe) + L-phenylalanine + ATP = L-phenylalanyl-tRNA(Phe) + AMP + diphosphate + H(+). In Borrelia duttonii (strain Ly), this protein is Phenylalanine--tRNA ligase beta subunit.